A 267-amino-acid polypeptide reads, in one-letter code: Phosphate import ATP-binding protein PstB (267 aa).

In terms of domain architecture, ABC transporter spans 21–262; it reads VAARNLDFYY…PSKQQTEDYI (242 aa). 53–60 contributes to the ATP binding site; it reads GPSGCGKS.

It belongs to the ABC transporter superfamily. Phosphate importer (TC 3.A.1.7) family. In terms of assembly, the complex is composed of two ATP-binding proteins (PstB), two transmembrane proteins (PstC and PstA) and a solute-binding protein (PstS).

It localises to the cell inner membrane. The enzyme catalyses phosphate(out) + ATP + H2O = ADP + 2 phosphate(in) + H(+). In terms of biological role, part of the ABC transporter complex PstSACB involved in phosphate import. Responsible for energy coupling to the transport system. This chain is Phosphate import ATP-binding protein PstB, found in Xanthomonas axonopodis pv. citri (strain 306).